A 273-amino-acid polypeptide reads, in one-letter code: Ribosomal RNA small subunit methyltransferase A (273 aa).

The S-adenosyl-L-methionine site is built by asparagine 18, leucine 20, glycine 45, glutamate 66, aspartate 91, and asparagine 113.

Belongs to the class I-like SAM-binding methyltransferase superfamily. rRNA adenine N(6)-methyltransferase family. RsmA subfamily.

It is found in the cytoplasm. The enzyme catalyses adenosine(1518)/adenosine(1519) in 16S rRNA + 4 S-adenosyl-L-methionine = N(6)-dimethyladenosine(1518)/N(6)-dimethyladenosine(1519) in 16S rRNA + 4 S-adenosyl-L-homocysteine + 4 H(+). Functionally, specifically dimethylates two adjacent adenosines (A1518 and A1519) in the loop of a conserved hairpin near the 3'-end of 16S rRNA in the 30S particle. May play a critical role in biogenesis of 30S subunits. This Escherichia coli O1:K1 / APEC protein is Ribosomal RNA small subunit methyltransferase A.